A 493-amino-acid chain; its full sequence is Cysteine--tRNA ligase (493 aa).

A Zn(2+)-binding site is contributed by Cys-29. Residues 31-41 (VTVYDYCHIGH) carry the 'HIGH' region motif. Cys-209, His-234, and Glu-238 together coordinate Zn(2+). The 'KMSKS' region motif lies at 266-270 (KMSKS). Lys-269 provides a ligand contact to ATP.

This sequence belongs to the class-I aminoacyl-tRNA synthetase family. Monomer. Zn(2+) serves as cofactor.

It is found in the cytoplasm. It carries out the reaction tRNA(Cys) + L-cysteine + ATP = L-cysteinyl-tRNA(Cys) + AMP + diphosphate. The polypeptide is Cysteine--tRNA ligase (Pelobacter propionicus (strain DSM 2379 / NBRC 103807 / OttBd1)).